Consider the following 230-residue polypeptide: 5'-methylthioadenosine/S-adenosylhomocysteine nucleosidase (230 aa).

Glu12 acts as the Proton acceptor in catalysis. Substrate is bound by residues Gly78, Ile153, and 174–175 (ME). Asp198 (proton donor) is an active-site residue.

It belongs to the PNP/UDP phosphorylase family. MtnN subfamily.

It catalyses the reaction S-adenosyl-L-homocysteine + H2O = S-(5-deoxy-D-ribos-5-yl)-L-homocysteine + adenine. It carries out the reaction S-methyl-5'-thioadenosine + H2O = 5-(methylsulfanyl)-D-ribose + adenine. The enzyme catalyses 5'-deoxyadenosine + H2O = 5-deoxy-D-ribose + adenine. The protein operates within amino-acid biosynthesis; L-methionine biosynthesis via salvage pathway; S-methyl-5-thio-alpha-D-ribose 1-phosphate from S-methyl-5'-thioadenosine (hydrolase route): step 1/2. Its function is as follows. Catalyzes the irreversible cleavage of the glycosidic bond in both 5'-methylthioadenosine (MTA) and S-adenosylhomocysteine (SAH/AdoHcy) to adenine and the corresponding thioribose, 5'-methylthioribose and S-ribosylhomocysteine, respectively. Also cleaves 5'-deoxyadenosine, a toxic by-product of radical S-adenosylmethionine (SAM) enzymes, into 5-deoxyribose and adenine. This is 5'-methylthioadenosine/S-adenosylhomocysteine nucleosidase from Shewanella denitrificans (strain OS217 / ATCC BAA-1090 / DSM 15013).